The chain runs to 206 residues: MTDQPRRRLVLASQSPARLNLLRQAGLDPEVIVSGFDEDRLSAPTPAELALALAEAKASVVAAKPEVQGALVIGCDSVLDLDGEALGKPADAEEATARWKAMRGRAGTLQTGHCIYDTASKRYASATASTVVRFGEPTDEEIAAYVASGEPLHVAGAFTLDGRSAPFIEGIDGDHGNVIGISLPTVRRLLGELGVGITQLWTPREK.

Asp76 functions as the Proton acceptor in the catalytic mechanism.

This sequence belongs to the Maf family. It depends on a divalent metal cation as a cofactor.

The protein localises to the cytoplasm. It carries out the reaction a ribonucleoside 5'-triphosphate + H2O = a ribonucleoside 5'-phosphate + diphosphate + H(+). The catalysed reaction is a 2'-deoxyribonucleoside 5'-triphosphate + H2O = a 2'-deoxyribonucleoside 5'-phosphate + diphosphate + H(+). Nucleoside triphosphate pyrophosphatase. May have a dual role in cell division arrest and in preventing the incorporation of modified nucleotides into cellular nucleic acids. The sequence is that of Nucleoside triphosphate pyrophosphatase from Streptomyces avermitilis (strain ATCC 31267 / DSM 46492 / JCM 5070 / NBRC 14893 / NCIMB 12804 / NRRL 8165 / MA-4680).